A 355-amino-acid chain; its full sequence is Blue-sensitive opsin (355 aa).

The Extracellular portion of the chain corresponds to 1-36; that stretch reads MNGTEGINFYVPLSNKTGLVRSPFEYPQYYLAEPWK. N-linked (GlcNAc...) asparagine glycosylation is found at Asn2 and Asn15. Residues 37 to 61 traverse the membrane as a helical segment; it reads YKVVCCYIFFLIFTGLPINILTLLV. Residues 62–73 lie on the Cytoplasmic side of the membrane; the sequence is TFKHKKLRQPLN. The chain crosses the membrane as a helical span at residues 74-98; it reads YILVNLAVADLFMACFGFTVTFYTA. Topologically, residues 99-113 are extracellular; it reads WNGYFIFGPIGCAIE. A disulfide bond links Cys110 and Cys187. The helical transmembrane segment at 114–133 threads the bilayer; that stretch reads GFFATLGGQVALWSLVVLAI. Topologically, residues 134–152 are cytoplasmic; it reads ERYIVVCKPMGNFRFSATH. Residues 153–176 form a helical membrane-spanning segment; the sequence is ALMGISFTWFMSFSCAAPPLLGWS. The Extracellular portion of the chain corresponds to 177 to 202; it reads RYIPEGMQCSCGPDYYTLNPDYHNES. A glycan (N-linked (GlcNAc...) asparagine) is linked at Asn200. A helical membrane pass occupies residues 203 to 230; the sequence is YVLYMFGVHFVIPVVVIFFSYGRLICKV. The Cytoplasmic portion of the chain corresponds to 231–252; the sequence is REAAAQQQESASTQKAEREVTR. The chain crosses the membrane as a helical span at residues 253 to 276; that stretch reads MVILMVLGFLLAWTPYAMVAFWIF. Residues 277 to 284 are Extracellular-facing; that stretch reads TNKGVDFS. Residues 285–309 traverse the membrane as a helical segment; it reads ATLMSVPAFFSKSSSLYNPIIYVLM. Lys296 carries the post-translational modification N6-(retinylidene)lysine. Residues 310–355 are Cytoplasmic-facing; it reads NKQFRNCMITTICCGKNPFGDEDVSSSVSQSKTEVSSVSSSQVSPA. Residues Cys322 and Cys323 are each lipidated (S-palmitoyl cysteine). Residues 332 to 355 are disordered; that stretch reads DVSSSVSQSKTEVSSVSSSQVSPA. Residues 334–355 show a composition bias toward low complexity; the sequence is SSSVSQSKTEVSSVSSSQVSPA.

Belongs to the G-protein coupled receptor 1 family. Opsin subfamily. Phosphorylated on some or all of the serine and threonine residues present in the C-terminal region.

The protein localises to the membrane. Visual pigments are the light-absorbing molecules that mediate vision. They consist of an apoprotein, opsin, covalently linked to cis-retinal. This opsin uses a vitamin A2 chromophore. This Anolis carolinensis (Green anole) protein is Blue-sensitive opsin.